We begin with the raw amino-acid sequence, 552 residues long: Glutamine-dependent NAD(+) synthetase (552 aa).

Residues 5 to 245 (FRITLAQLNP…EAVVHVDLER (241 aa)) enclose the CN hydrolase domain. The active-site Proton acceptor; for glutaminase activity is the Glu-45. Residue Lys-113 is the For glutaminase activity of the active site. The active-site Nucleophile; for glutaminase activity is Cys-149. Residues Ser-175 and Lys-181 each contribute to the L-glutamine site. The interval 275 to 552 (LQDYLRKSGF…PMVNRWRDQS (278 aa)) is ligase. 290–297 (GLSGGIDS) lines the ATP pocket. Asn-373 serves as a coordination point for deamido-NAD(+). Thr-397 lines the ATP pocket. 2 residues coordinate deamido-NAD(+): Glu-402 and Lys-521.

It in the C-terminal section; belongs to the NAD synthetase family.

The enzyme catalyses deamido-NAD(+) + L-glutamine + ATP + H2O = L-glutamate + AMP + diphosphate + NAD(+) + H(+). It functions in the pathway cofactor biosynthesis; NAD(+) biosynthesis; NAD(+) from deamido-NAD(+) (L-Gln route): step 1/1. Its function is as follows. Catalyzes the ATP-dependent amidation of deamido-NAD to form NAD. Uses L-glutamine as a nitrogen source. The polypeptide is Glutamine-dependent NAD(+) synthetase (Rhodobacter capsulatus (Rhodopseudomonas capsulata)).